Consider the following 308-residue polypeptide: Oxygen-dependent coproporphyrinogen-III oxidase (308 aa).

Ser92 contributes to the substrate binding site. A divalent metal cation-binding residues include His96 and His106. His106 acts as the Proton donor in catalysis. Residue 108 to 110 (NVR) participates in substrate binding. Residues His145 and His175 each coordinate a divalent metal cation. Positions 240 to 275 (YVEFNLVWDRGTLFGLQTGGRTESILMSMPPLVRWE) are important for dimerization. 258 to 260 (GGR) contributes to the substrate binding site.

This sequence belongs to the aerobic coproporphyrinogen-III oxidase family. Homodimer. A divalent metal cation serves as cofactor.

It localises to the cytoplasm. It carries out the reaction coproporphyrinogen III + O2 + 2 H(+) = protoporphyrinogen IX + 2 CO2 + 2 H2O. It participates in porphyrin-containing compound metabolism; protoporphyrin-IX biosynthesis; protoporphyrinogen-IX from coproporphyrinogen-III (O2 route): step 1/1. Functionally, involved in the heme biosynthesis. Catalyzes the aerobic oxidative decarboxylation of propionate groups of rings A and B of coproporphyrinogen-III to yield the vinyl groups in protoporphyrinogen-IX. In Salmonella paratyphi A (strain ATCC 9150 / SARB42), this protein is Oxygen-dependent coproporphyrinogen-III oxidase.